Consider the following 837-residue polypeptide: Striatin-interacting protein 1 (837 aa).

N-acetylmethionine is present on Met-1. Disordered regions lie at residues 1–66 (MEPA…SESP) and 333–423 (AASP…KGLP). Residues 18-35 (PQPPPPPPPATAQPPPGA) are compositionally biased toward pro residues. Over residues 47–60 (KAREFNRNQRKDSE) the composition is skewed to basic and acidic residues. Residues Ser-59, Ser-335, and Ser-339 each carry the phosphoserine modification. The span at 356 to 377 (KALIKQDNLDAFNERDPYKADD) shows a compositional bias: basic and acidic residues. Residues 378–391 (SREEEEENDDDNSL) show a composition bias toward acidic residues. Ser-788 carries the post-translational modification Phosphoserine. The segment at 796-837 (DNCLQSVLGQRVDLPEDFQMNYDLWLEREVFSKPISWEELLQ) is required for STRIPAK core complex formation.

It belongs to the STRIP family. As to quaternary structure, part of the core of STRIPAK complexes composed of PP2A catalytic and scaffolding subunits, the striatins (PP2A regulatory subunits), the striatin-associated proteins MOB4, STRIP1 and STRIP2, PDCD10 and members of the STE20 kinases, such as STK24 and STK26. The STRIPAK complex can be extended by adapter proteins such as SLMAP:SIKE1, CTTNBP2 or CTTNBP2NL. Interacts with CDC42BPB. Interacts with CTTNBP2NL.

It is found in the cytoplasm. Functionally, plays a role in the regulation of cell morphology and cytoskeletal organization. Required in the cortical actin filament dynamics and cell shape. Part of the striatin-interacting phosphatase and kinase (STRIPAK) complexes. STRIPAK complexes have critical roles in protein (de)phosphorylation and are regulators of multiple signaling pathways including Hippo, MAPK, nuclear receptor and cytoskeleton remodeling. Different types of STRIPAK complexes are involved in a variety of biological processes such as cell growth, differentiation, apoptosis, metabolism and immune regulation. This is Striatin-interacting protein 1 (STRIP1) from Macaca fascicularis (Crab-eating macaque).